We begin with the raw amino-acid sequence, 250 residues long: uncharacterized protein (250 aa).

Residues 1–24 (MKGFLKPNFSLGALFLTLSPIATA) form the signal peptide. A lipid anchor (N-palmitoyl cysteine) is attached at Cys-25. Residue Cys-25 is the site of S-diacylglycerol cysteine attachment. In terms of domain architecture, TNase-like spans 44 to 200 (RLRKARVNHW…FNNRKNIFSY (157 aa)).

Its subcellular location is the cell membrane. This is an uncharacterized protein from Mycoplasma genitalium (strain ATCC 33530 / DSM 19775 / NCTC 10195 / G37) (Mycoplasmoides genitalium).